The sequence spans 587 residues: Aspartate--tRNA ligase (587 aa).

Glu-174 is a binding site for L-aspartate. Residues 198-201 (QITK) form an aspartate region. An L-aspartate-binding site is contributed by Arg-220. ATP is bound by residues 220–222 (RDE) and Gln-229. His-443 is a binding site for L-aspartate. Residue Glu-477 coordinates ATP. Arg-484 is an L-aspartate binding site. 529–532 (GLDR) is an ATP binding site.

It belongs to the class-II aminoacyl-tRNA synthetase family. Type 1 subfamily. As to quaternary structure, homodimer.

It localises to the cytoplasm. The enzyme catalyses tRNA(Asp) + L-aspartate + ATP = L-aspartyl-tRNA(Asp) + AMP + diphosphate. Its function is as follows. Catalyzes the attachment of L-aspartate to tRNA(Asp) in a two-step reaction: L-aspartate is first activated by ATP to form Asp-AMP and then transferred to the acceptor end of tRNA(Asp). This chain is Aspartate--tRNA ligase, found in Streptococcus pneumoniae serotype 19F (strain G54).